The following is a 954-amino-acid chain: Kinesin-like protein KIN-14Q (954 aa).

The Calponin-homology (CH) domain maps to 33–155; sequence AMRRYDAASW…CVLALKSFSE (123 aa). A Kinesin motor domain is found at 374–699; it reads NIRVYCRVRP…LKFAERVASV (326 aa). 457–464 contributes to the ATP binding site; sequence GQTGSGKT. The stretch at 704–733 forms a coiled coil; that stretch reads AKANKEGSEVRELKEQIATLKAALAKKEGE. Over residues 844–855 the composition is skewed to basic and acidic residues; sequence YDPDKQRRRAEP. Disordered regions lie at residues 844-876 and 912-954; these read YDPD…DQEM and PNLA…NTPK. Low complexity predominate over residues 864–873; it reads FDAATSSPSD. Polar residues predominate over residues 928 to 954; sequence PIRNSKQLPFSTTGGRRTRNGKINTPK.

Belongs to the TRAFAC class myosin-kinesin ATPase superfamily. Kinesin family. KIN-14 subfamily. As to quaternary structure, forms oligomers in vitro. Interacts with actin microfilaments. Binds to actin in vitro through its calponin-homology (CH) domain. As to expression, expressed in primary leaf, primary root, developing flower and coleoptile.

It is found in the cytoplasm. The protein resides in the cytoskeleton. The microtubule-dependent ATPase activity is regulated by actin binding. In terms of biological role, minus end-directed motor protein that transports actin filaments along microtubules. Plays a central role in the polar orientation of actin filaments along microtubules, and thus a contribution to the organization of the cytoskeletal architecture. Links the actin microfilaments with the cortical microtubules in both cycling and non-cycling cells. Required for efficient cell elongation by its participation in the premitotic nuclear positioning. The sequence is that of Kinesin-like protein KIN-14Q from Oryza sativa subsp. japonica (Rice).